Here is a 381-residue protein sequence, read N- to C-terminus: 1-deoxy-D-xylulose 5-phosphate reductoisomerase (381 aa).

Thr-10, Gly-11, Ser-12, Ile-13, Asn-38, and Asn-121 together coordinate NADPH. Lys-122 provides a ligand contact to 1-deoxy-D-xylulose 5-phosphate. Residue Glu-123 coordinates NADPH. A Mn(2+)-binding site is contributed by Asp-147. Residues Ser-148, Glu-149, Ser-173, and His-196 each contribute to the 1-deoxy-D-xylulose 5-phosphate site. Residue Glu-149 coordinates Mn(2+). Gly-202 serves as a coordination point for NADPH. Ser-209, Asn-214, Lys-215, and Glu-218 together coordinate 1-deoxy-D-xylulose 5-phosphate. A Mn(2+)-binding site is contributed by Glu-218.

The protein belongs to the DXR family. Requires Mg(2+) as cofactor. Mn(2+) is required as a cofactor.

It carries out the reaction 2-C-methyl-D-erythritol 4-phosphate + NADP(+) = 1-deoxy-D-xylulose 5-phosphate + NADPH + H(+). Its pathway is isoprenoid biosynthesis; isopentenyl diphosphate biosynthesis via DXP pathway; isopentenyl diphosphate from 1-deoxy-D-xylulose 5-phosphate: step 1/6. Catalyzes the NADPH-dependent rearrangement and reduction of 1-deoxy-D-xylulose-5-phosphate (DXP) to 2-C-methyl-D-erythritol 4-phosphate (MEP). The chain is 1-deoxy-D-xylulose 5-phosphate reductoisomerase from Alkaliphilus oremlandii (strain OhILAs) (Clostridium oremlandii (strain OhILAs)).